Consider the following 255-residue polypeptide: D-aminoacyl-tRNA deacylase (255 aa).

This sequence belongs to the DtdA deacylase family. As to quaternary structure, monomer. The cofactor is Zn(2+).

The enzyme catalyses a D-aminoacyl-tRNA + H2O = a tRNA + a D-alpha-amino acid + H(+). It catalyses the reaction glycyl-tRNA(Ala) + H2O = tRNA(Ala) + glycine + H(+). D-aminoacyl-tRNA deacylase with broad substrate specificity. By recycling D-aminoacyl-tRNA to D-amino acids and free tRNA molecules, this enzyme counteracts the toxicity associated with the formation of D-aminoacyl-tRNA entities in vivo. In Picrophilus torridus (strain ATCC 700027 / DSM 9790 / JCM 10055 / NBRC 100828 / KAW 2/3), this protein is D-aminoacyl-tRNA deacylase.